Consider the following 507-residue polypeptide: Probable Xaa-Pro aminopeptidase ARB_01886 (507 aa).

Residues Asp275, Asp286, Glu434, and Glu478 each contribute to the Mn(2+) site.

The protein belongs to the peptidase M24B family. Mn(2+) serves as cofactor.

It catalyses the reaction Release of any N-terminal amino acid, including proline, that is linked to proline, even from a dipeptide or tripeptide.. In terms of biological role, catalyzes the removal of a penultimate prolyl residue from the N-termini of peptides. The polypeptide is Probable Xaa-Pro aminopeptidase ARB_01886 (Arthroderma benhamiae (strain ATCC MYA-4681 / CBS 112371) (Trichophyton mentagrophytes)).